Reading from the N-terminus, the 345-residue chain is Dihydroorotase (345 aa).

Residues histidine 13 and histidine 15 each coordinate Zn(2+). Residues histidine 15–arginine 17 and asparagine 41 each bind substrate. 4 residues coordinate Zn(2+): lysine 99, histidine 136, histidine 174, and aspartate 247. At lysine 99 the chain carries N6-carboxylysine. A substrate-binding site is contributed by histidine 136. Residue aspartate 247 is part of the active site. 2 residues coordinate substrate: histidine 251 and alanine 263.

Belongs to the metallo-dependent hydrolases superfamily. DHOase family. Class II DHOase subfamily. As to quaternary structure, homodimer. Zn(2+) serves as cofactor.

The enzyme catalyses (S)-dihydroorotate + H2O = N-carbamoyl-L-aspartate + H(+). The protein operates within pyrimidine metabolism; UMP biosynthesis via de novo pathway; (S)-dihydroorotate from bicarbonate: step 3/3. Catalyzes the reversible cyclization of carbamoyl aspartate to dihydroorotate. This chain is Dihydroorotase, found in Halorhodospira halophila (strain DSM 244 / SL1) (Ectothiorhodospira halophila (strain DSM 244 / SL1)).